The sequence spans 452 residues: Putrescine hydroxycinnamoyltransferase (452 aa).

His151 serves as the catalytic Proton acceptor. Positions 213-234 (PAAGVDGDVGGDHKQQHGHGGE) are disordered. The span at 222 to 234 (GGDHKQQHGHGGE) shows a compositional bias: basic and acidic residues. The active-site Proton acceptor is Asp398.

It belongs to the plant acyltransferase family. In terms of tissue distribution, highly expressed in roots. Expressed at low levels in flowers.

Its function is as follows. Hydroxycinnamoyl transferase that catalyzes the transfer of an acyl from p-coumaryol-CoA to putrescine, to produce coumaroyl putrescine. Can use feruloyl-CoA, caffeoyl-CoA and sinapoyl-CoA as acyl donors. Seems to be able to transfer the acyl group from feruloyl-CoA to the acyl acceptors agmatine and spermidine. The sequence is that of Putrescine hydroxycinnamoyltransferase from Oryza sativa subsp. japonica (Rice).